Here is a 342-residue protein sequence, read N- to C-terminus: Ribosomal RNA small subunit methyltransferase H (342 aa).

S-adenosyl-L-methionine-binding positions include 36 to 38 (GGH), D56, F82, D100, and Q107. Positions 311-342 (GESGMGKGNSAAASRFPTADSPFPASANGDAA) are disordered.

Belongs to the methyltransferase superfamily. RsmH family.

It is found in the cytoplasm. The enzyme catalyses cytidine(1402) in 16S rRNA + S-adenosyl-L-methionine = N(4)-methylcytidine(1402) in 16S rRNA + S-adenosyl-L-homocysteine + H(+). In terms of biological role, specifically methylates the N4 position of cytidine in position 1402 (C1402) of 16S rRNA. This Xanthomonas axonopodis pv. citri (strain 306) protein is Ribosomal RNA small subunit methyltransferase H.